The chain runs to 493 residues: Putative MgpC-like protein MPN_414 (493 aa).

The segment covering 1 to 14 (MKPTSLPKNFTNNP) has biased composition (polar residues). 2 disordered regions span residues 1–92 (MKPT…GHNS) and 441–493 (KSAR…SGNH). Basic and acidic residues-rich tracts occupy residues 25 to 34 (DNGRAYRKLN) and 44 to 56 (DSTKDGKGKDKDG). 2 stretches are compositionally biased toward polar residues: residues 72–92 (VSSTGSQMSAVTDSQQSGHNS) and 445–472 (ENAQSTSDDNSNTKVKWTKPPRTTSPCR). Over residues 482 to 493 (RVTEEERSSGNH) the composition is skewed to basic and acidic residues.

The protein belongs to the MgpC family.

This Mycoplasma pneumoniae (strain ATCC 29342 / M129 / Subtype 1) (Mycoplasmoides pneumoniae) protein is Putative MgpC-like protein MPN_414.